A 324-amino-acid polypeptide reads, in one-letter code: MQKKYITAIIGTTALSALASTHAQAATTHTVKSGESVWSISHKYGISIAKLKSLNGLTSNLIFPNQVLKVSGSSSRATSTNSGTVYTVKAGDSLSSIAAKYGTTYQKIMQLNGLNNYLIFPGQKLKVSGKATSSSRAKASGSSGRTATYTVKYGDSLSAIASKYGTTYQKIMQLNGLTNFFIYPGQKLKVPGGSSSSSSSNNTRSNGGYYSPTFNHQNLYTWGQCTWHVFNRRAEIGKGISTYWWNANNWDNASAADGYTIDYRPTVGSIAQTDAGYYGHVAFVERVNSDGSILVSEMNWSAAPGNMTYRTIPAYQVRNYKFIH.

The N-terminal stretch at 1–25 (MQKKYITAIIGTTALSALASTHAQA) is a signal peptide. 3 consecutive LysM domains span residues 27–70 (TTHT…VLKV), 84–127 (TVYT…KLKV), and 147–190 (ATYT…KLKV). Residues 200–324 (SNNTRSNGGY…YQVRNYKFIH (125 aa)) form the Peptidase C51 domain.

It localises to the secreted. It is found in the cell surface. The catalysed reaction is Hydrolyzes the link between N-acetylmuramoyl residues and L-amino acid residues in certain cell-wall glycopeptides.. Functionally, peptidoglycan hydrolase involved in the splitting of the septum during cell division. This Staphylococcus epidermidis (strain ATCC 12228 / FDA PCI 1200) protein is N-acetylmuramoyl-L-alanine amidase sle1 (sle1).